Here is a 316-residue protein sequence, read N- to C-terminus: Calumenin-B (316 aa).

The signal sequence occupies residues 1-19 (MELRPLVMCFALCVVYASS). 6 EF-hand domains span residues 69–104 (ESKE…SQKR), 105–140 (WIYD…YILD), 152–187 (QMIS…EEYD), 189–224 (MKDI…QEGD), 230–265 (WVRT…SDYD), and 266–301 (HAEA…FVGS). Ca(2+) contacts are provided by aspartate 82, aspartate 84, aspartate 86, tyrosine 88, glutamate 93, aspartate 118, asparagine 120, aspartate 122, and glutamate 129. An N-linked (GlcNAc...) asparagine glycan is attached at asparagine 132. Ca(2+) is bound by residues aspartate 165, aspartate 167, aspartate 169, lysine 171, glutamate 176, aspartate 202, asparagine 204, aspartate 206, glutamate 213, aspartate 243, asparagine 245, aspartate 247, arginine 249, glutamate 254, aspartate 279, aspartate 281, aspartate 283, lysine 285, and glutamate 290. The Prevents secretion from ER signature appears at 313–316 (HDEF).

Belongs to the CREC family. Interacts with ggcx.

It localises to the endoplasmic reticulum membrane. It is found in the golgi apparatus. The protein resides in the secreted. Its subcellular location is the melanosome. The protein localises to the sarcoplasmic reticulum lumen. Its function is as follows. Involved in regulation of vitamin K-dependent carboxylation of multiple N-terminal glutamate residues. Seems to inhibit gamma-carboxylase ggcx. Binds 7 calcium ions with a low affinity. This is Calumenin-B (calub) from Salmo salar (Atlantic salmon).